The sequence spans 185 residues: Photosystem I assembly protein Ycf4 (185 aa).

2 helical membrane-spanning segments follow: residues 24–44 (YIIGGMLTIGGIGFLLASISS) and 66–86 (IIMGAYGVVANLLNFYLWYMV).

Belongs to the Ycf4 family.

The protein localises to the cellular thylakoid membrane. Seems to be required for the assembly of the photosystem I complex. The sequence is that of Photosystem I assembly protein Ycf4 from Prochlorococcus marinus (strain MIT 9312).